The sequence spans 103 residues: Fe-S cluster assembly protein DRE2 (103 aa).

Residues lysine 19–leucine 103 form a disordered region. [2Fe-2S] cluster is bound by residues cysteine 42, cysteine 50, cysteine 53, and cysteine 55. A fe-S binding site A region spans residues cysteine 42 to cysteine 55. Residues cysteine 70, cysteine 73, cysteine 81, and cysteine 84 each contribute to the [4Fe-4S] cluster site. 2 consecutive short sequence motifs (cx2C motif) follow at residues cysteine 70 to cysteine 73 and cysteine 81 to cysteine 84. A fe-S binding site B region spans residues cysteine 70–cysteine 84.

Belongs to the anamorsin family. Monomer. Interacts with TAH18. Interacts with MIA40. Requires [4Fe-4S] cluster as cofactor.

Its subcellular location is the cytoplasm. The protein resides in the mitochondrion intermembrane space. Its function is as follows. Component of the cytosolic iron-sulfur (Fe-S) protein assembly (CIA) machinery required for the maturation of extramitochondrial Fe-S proteins. Part of an electron transfer chain functioning in an early step of cytosolic Fe-S biogenesis, facilitating the de novo assembly of a [4Fe-4S] cluster on the scaffold complex CFD1-NBP35. Electrons are transferred to DRE2 from NADPH via the FAD- and FMN-containing protein TAH18. TAH18-DRE2 are also required for the assembly of the diferric tyrosyl radical cofactor of ribonucleotide reductase (RNR), probably by providing electrons for reduction during radical cofactor maturation in the catalytic small subunit RNR2. This Enterocytozoon bieneusi (strain H348) (Microsporidian parasite) protein is Fe-S cluster assembly protein DRE2 (DRE2).